We begin with the raw amino-acid sequence, 1375 residues long: DNA-directed RNA polymerase subunit beta (1375 aa).

Belongs to the RNA polymerase beta chain family. The RNAP catalytic core consists of 2 alpha, 1 beta, 1 beta' and 1 omega subunit. When a sigma factor is associated with the core the holoenzyme is formed, which can initiate transcription.

The enzyme catalyses RNA(n) + a ribonucleoside 5'-triphosphate = RNA(n+1) + diphosphate. DNA-dependent RNA polymerase catalyzes the transcription of DNA into RNA using the four ribonucleoside triphosphates as substrates. This is DNA-directed RNA polymerase subunit beta from Oleidesulfovibrio alaskensis (strain ATCC BAA-1058 / DSM 17464 / G20) (Desulfovibrio alaskensis).